The following is an 87-amino-acid chain: Small ribosomal subunit protein bS20 (87 aa).

Residues M1–M27 are disordered.

The protein belongs to the bacterial ribosomal protein bS20 family.

Binds directly to 16S ribosomal RNA. This Pectobacterium carotovorum subsp. carotovorum (strain PC1) protein is Small ribosomal subunit protein bS20.